Reading from the N-terminus, the 286-residue chain is Protoheme IX farnesyltransferase (286 aa).

8 consecutive transmembrane segments (helical) span residues 14 to 31 (FRLTSTVAFSSGMGYILA), 38 to 58 (WLNLVLFLIGGFSITVSANII), 94 to 114 (LFLIAGTVILAVYSTLNALIL), 135 to 155 (IAVFIGAFPGAFPPMIGWIAV), 165 to 185 (VLFAIQFLWQFPHFWAIAWVL), 207 to 227 (TATIIMTYTLCLLPLGFLPYL), 228 to 248 (FGMSGITSAYIALACGILFFF), and 262 to 282 (ALLLMFGSFLYLPIVQIAFVL).

The protein belongs to the UbiA prenyltransferase family. Protoheme IX farnesyltransferase subfamily.

It localises to the cell inner membrane. The enzyme catalyses heme b + (2E,6E)-farnesyl diphosphate + H2O = Fe(II)-heme o + diphosphate. It functions in the pathway porphyrin-containing compound metabolism; heme O biosynthesis; heme O from protoheme: step 1/1. Converts heme B (protoheme IX) to heme O by substitution of the vinyl group on carbon 2 of heme B porphyrin ring with a hydroxyethyl farnesyl side group. This is Protoheme IX farnesyltransferase from Cytophaga hutchinsonii (strain ATCC 33406 / DSM 1761 / CIP 103989 / NBRC 15051 / NCIMB 9469 / D465).